The primary structure comprises 100 residues: Large ribosomal subunit protein uL23 (100 aa).

Belongs to the universal ribosomal protein uL23 family. As to quaternary structure, part of the 50S ribosomal subunit. Contacts protein L29, and trigger factor when it is bound to the ribosome.

One of the early assembly proteins it binds 23S rRNA. One of the proteins that surrounds the polypeptide exit tunnel on the outside of the ribosome. Forms the main docking site for trigger factor binding to the ribosome. The sequence is that of Large ribosomal subunit protein uL23 from Shewanella frigidimarina (strain NCIMB 400).